A 183-amino-acid chain; its full sequence is Peptide deformylase (183 aa).

2 residues coordinate Fe cation: Cys-111 and His-154. Glu-155 is an active-site residue. Residue His-158 coordinates Fe cation.

It belongs to the polypeptide deformylase family. It depends on Fe(2+) as a cofactor.

The enzyme catalyses N-terminal N-formyl-L-methionyl-[peptide] + H2O = N-terminal L-methionyl-[peptide] + formate. Functionally, removes the formyl group from the N-terminal Met of newly synthesized proteins. Requires at least a dipeptide for an efficient rate of reaction. N-terminal L-methionine is a prerequisite for activity but the enzyme has broad specificity at other positions. In Staphylococcus epidermidis (strain ATCC 35984 / DSM 28319 / BCRC 17069 / CCUG 31568 / BM 3577 / RP62A), this protein is Peptide deformylase.